We begin with the raw amino-acid sequence, 356 residues long: MRVEVLDNKRRIVRLRPESEEDLWLLRITLRPGDVVRIRTSRDVPVGSGRKERVVMTLRIRLDSIEFQPFTGKLRISGIVVEGPDEFGVKGRRHSTAVSIGTWLVVERDKGWSEQELERLASGRARGTAVIAAVDYDEFALAVLAGHGMKILEDTSARLPGKDDPSREQEVEKYVDRAAKRIVEEAARHRSPIAVIAGPGQLKTSVAEKVQRAMPSLKVATVDTSMGGVAGVREALRRESVTRILRELSIVEAEGVLEEFLRRIAKSRDTVAYTPGEVLAVARMGAVDTVLLVDTLLHSPDDAVREAVDEALRLVESMGGRVIIIPGDSPAGERLVSFGGVIALLRYPVPQEARRL.

It belongs to the eukaryotic release factor 1 family. Pelota subfamily. In terms of assembly, monomer. Requires a divalent metal cation as cofactor.

The protein localises to the cytoplasm. Functionally, may function in recognizing stalled ribosomes, interact with stem-loop structures in stalled mRNA molecules, and effect endonucleolytic cleavage of the mRNA. May play a role in the release non-functional ribosomes and degradation of damaged mRNAs. Has endoribonuclease activity. The protein is Protein pelota homolog of Aeropyrum pernix (strain ATCC 700893 / DSM 11879 / JCM 9820 / NBRC 100138 / K1).